The sequence spans 371 residues: Carbamoyl phosphate synthase small chain (371 aa).

Residues 1 to 190 form a CPSase region; the sequence is MRKTAILALE…LYRENEKPLV (190 aa). Positions 47, 237, and 239 each coordinate L-glutamine. The region spanning 189-371 is the Glutamine amidotransferase type-1 domain; that stretch reads LVAVIDFGVK…FKEFVKMAQG (183 aa). The active-site Nucleophile is the cysteine 264. The L-glutamine site is built by leucine 265, glutamine 268, asparagine 306, and phenylalanine 309. Active-site residues include histidine 348 and glutamate 350.

The protein belongs to the CarA family. As to quaternary structure, composed of two chains; the small (or glutamine) chain promotes the hydrolysis of glutamine to ammonia, which is used by the large (or ammonia) chain to synthesize carbamoyl phosphate. Tetramer of heterodimers (alpha,beta)4.

The enzyme catalyses hydrogencarbonate + L-glutamine + 2 ATP + H2O = carbamoyl phosphate + L-glutamate + 2 ADP + phosphate + 2 H(+). It catalyses the reaction L-glutamine + H2O = L-glutamate + NH4(+). The protein operates within amino-acid biosynthesis; L-arginine biosynthesis; carbamoyl phosphate from bicarbonate: step 1/1. It functions in the pathway pyrimidine metabolism; UMP biosynthesis via de novo pathway; (S)-dihydroorotate from bicarbonate: step 1/3. In terms of biological role, small subunit of the glutamine-dependent carbamoyl phosphate synthetase (CPSase). CPSase catalyzes the formation of carbamoyl phosphate from the ammonia moiety of glutamine, carbonate, and phosphate donated by ATP, constituting the first step of 2 biosynthetic pathways, one leading to arginine and/or urea and the other to pyrimidine nucleotides. The small subunit (glutamine amidotransferase) binds and cleaves glutamine to supply the large subunit with the substrate ammonia. The chain is Carbamoyl phosphate synthase small chain from Aquifex aeolicus (strain VF5).